The chain runs to 147 residues: Deoxyuridine 5'-triphosphate nucleotidohydrolase (147 aa).

Substrate-binding positions include 67–69 (RSG), Asn80, and 84–86 (TID).

It belongs to the dUTPase family. Mg(2+) serves as cofactor.

The catalysed reaction is dUTP + H2O = dUMP + diphosphate + H(+). The protein operates within pyrimidine metabolism; dUMP biosynthesis; dUMP from dCTP (dUTP route): step 2/2. Its function is as follows. This enzyme is involved in nucleotide metabolism: it produces dUMP, the immediate precursor of thymidine nucleotides and it decreases the intracellular concentration of dUTP so that uracil cannot be incorporated into DNA. This is Deoxyuridine 5'-triphosphate nucleotidohydrolase from Anaeromyxobacter dehalogenans (strain 2CP-1 / ATCC BAA-258).